Here is a 156-residue protein sequence, read N- to C-terminus: Ribosome maturation factor RimP (156 aa).

This sequence belongs to the RimP family.

The protein resides in the cytoplasm. Required for maturation of 30S ribosomal subunits. This chain is Ribosome maturation factor RimP, found in Dictyoglomus thermophilum (strain ATCC 35947 / DSM 3960 / H-6-12).